The chain runs to 219 residues: Ribosomal RNA small subunit methyltransferase G (219 aa).

S-adenosyl-L-methionine contacts are provided by glycine 81, leucine 86, and arginine 150.

It belongs to the methyltransferase superfamily. RNA methyltransferase RsmG family.

The protein localises to the cytoplasm. It catalyses the reaction guanosine(527) in 16S rRNA + S-adenosyl-L-methionine = N(7)-methylguanosine(527) in 16S rRNA + S-adenosyl-L-homocysteine. Specifically methylates the N7 position of guanine in position 527 of 16S rRNA. This Magnetococcus marinus (strain ATCC BAA-1437 / JCM 17883 / MC-1) protein is Ribosomal RNA small subunit methyltransferase G.